The following is a 377-amino-acid chain: RING-H2 finger protein ATL22 (377 aa).

The signal sequence occupies residues 1–23 (MTSKLLPLLLNLIFLFFFPLLNA). A helical membrane pass occupies residues 244–264 (IMCLSLVGPLTALTFCVGLVM). The RING-type; atypical zinc-finger motif lies at 327–369 (CPICLSEYATKETVRCLPECEHCFHTECIDAWLKLHSSCPVCR).

This sequence belongs to the RING-type zinc finger family. ATL subfamily.

The protein resides in the membrane. The catalysed reaction is S-ubiquitinyl-[E2 ubiquitin-conjugating enzyme]-L-cysteine + [acceptor protein]-L-lysine = [E2 ubiquitin-conjugating enzyme]-L-cysteine + N(6)-ubiquitinyl-[acceptor protein]-L-lysine.. It functions in the pathway protein modification; protein ubiquitination. This Arabidopsis thaliana (Mouse-ear cress) protein is RING-H2 finger protein ATL22 (ATL22).